Consider the following 277-residue polypeptide: Caspase-3 (277 aa).

Met-1 is modified (N-acetylmethionine). Propeptides lie at residues 1-9 and 10-28; these read MENTENSVD and SKSI…QSMD. Over residues 1–10 the composition is skewed to polar residues; it reads MENTENSVDS. A disordered region spans residues 1–20; that stretch reads MENTENSVDSKSIKNLEPKI. The residue at position 11 (Lys-11) is an N6-acetyllysine. Over residues 11–20 the composition is skewed to basic and acidic residues; that stretch reads KSIKNLEPKI. Ser-26 carries the post-translational modification Phosphoserine. Active-site residues include His-121 and Cys-163. The residue at position 163 (Cys-163) is an S-nitrosocysteine; in inhibited form.

Belongs to the peptidase C14A family. In terms of assembly, heterotetramer that consists of two anti-parallel arranged heterodimers, each one formed by a 17 kDa (p17) and a 12 kDa (p12) subunit. Interacts with BIRC6/bruce. In terms of processing, cleavage by granzyme B, caspase-6, caspase-8 and caspase-10 generates the two active subunits. Additional processing of the propeptides is likely due to the autocatalytic activity of the activated protease. Active heterodimers between the small subunit of caspase-7 protease and the large subunit of caspase-3 also occur and vice versa. Post-translationally, S-nitrosylated on its catalytic site cysteine in unstimulated cell lines and denitrosylated upon activation of the Fas apoptotic pathway, associated with an increase in intracellular caspase activity. Fas therefore activates caspase-3 not only by inducing the cleavage of the caspase zymogen to its active subunits, but also by stimulating the denitrosylation of its active site thiol. Ubiquitinated by BIRC6; this activity is inhibited by DIABLO/SMAC.

Its subcellular location is the cytoplasm. The catalysed reaction is Strict requirement for an Asp residue at positions P1 and P4. It has a preferred cleavage sequence of Asp-Xaa-Xaa-Asp-|- with a hydrophobic amino-acid residue at P2 and a hydrophilic amino-acid residue at P3, although Val or Ala are also accepted at this position.. With respect to regulation, inhibited by BIRC6; following inhibition of BIRC6-caspase binding by DIABLO/SMAC, BIRC6 is subjected to caspase cleavage, leading to an increase in active caspases. Involved in the activation cascade of caspases responsible for apoptosis execution. At the onset of apoptosis, it proteolytically cleaves poly(ADP-ribose) polymerase PARP1 at a '216-Asp-|-Gly-217' bond. Cleaves and activates sterol regulatory element binding proteins (SREBPs) between the basic helix-loop-helix leucine zipper domain and the membrane attachment domain. Cleaves and activates caspase-6, -7 and -9 (CASP6, CASP7 and CASP9, respectively). Cleaves and inactivates interleukin-18 (IL18). Triggers cell adhesion in sympathetic neurons through RET cleavage. Cleaves IL-1 beta between an Asp and an Ala, releasing the mature cytokine which is involved in a variety of inflammatory processes. Cleaves and inhibits serine/threonine-protein kinase AKT1 in response to oxidative stress. Acts as an inhibitor of type I interferon production during virus-induced apoptosis by mediating cleavage of antiviral proteins CGAS, IRF3 and MAVS, thereby preventing cytokine overproduction. Also involved in pyroptosis by mediating cleavage and activation of gasdermin-E (GSDME). Cleaves XRCC4 and phospholipid scramblase proteins XKR4, XKR8 and XKR9, leading to promote phosphatidylserine exposure on apoptotic cell surface. Cleaves BIRC6 following inhibition of BIRC6-caspase binding by DIABLO/SMAC. The chain is Caspase-3 (CASP3) from Pan troglodytes (Chimpanzee).